The sequence spans 307 residues: Aspartate carbamoyltransferase catalytic subunit (307 aa).

Carbamoyl phosphate is bound by residues Arg56 and Thr57. Lys84 is an L-aspartate binding site. Carbamoyl phosphate is bound by residues Arg106, His136, and Gln139. L-aspartate is bound by residues Arg169 and Arg221. Positions 262 and 263 each coordinate carbamoyl phosphate.

It belongs to the aspartate/ornithine carbamoyltransferase superfamily. ATCase family. In terms of assembly, heterododecamer (2C3:3R2) of six catalytic PyrB chains organized as two trimers (C3), and six regulatory PyrI chains organized as three dimers (R2).

It catalyses the reaction carbamoyl phosphate + L-aspartate = N-carbamoyl-L-aspartate + phosphate + H(+). Its pathway is pyrimidine metabolism; UMP biosynthesis via de novo pathway; (S)-dihydroorotate from bicarbonate: step 2/3. Catalyzes the condensation of carbamoyl phosphate and aspartate to form carbamoyl aspartate and inorganic phosphate, the committed step in the de novo pyrimidine nucleotide biosynthesis pathway. The sequence is that of Aspartate carbamoyltransferase catalytic subunit from Streptococcus pneumoniae (strain JJA).